The sequence spans 156 residues: Small ribosomal subunit protein uS7c (156 aa).

Belongs to the universal ribosomal protein uS7 family. As to quaternary structure, part of the 30S ribosomal subunit.

It localises to the plastid. It is found in the chloroplast. Its function is as follows. One of the primary rRNA binding proteins, it binds directly to 16S rRNA where it nucleates assembly of the head domain of the 30S subunit. The chain is Small ribosomal subunit protein uS7c (rps7) from Guillardia theta (Cryptophyte).